The chain runs to 312 residues: Ribosomal RNA small subunit methyltransferase H (312 aa).

Residues 34-36, aspartate 54, phenylalanine 78, aspartate 100, and glutamine 107 each bind S-adenosyl-L-methionine; that span reads GGH.

The protein belongs to the methyltransferase superfamily. RsmH family.

Its subcellular location is the cytoplasm. It carries out the reaction cytidine(1402) in 16S rRNA + S-adenosyl-L-methionine = N(4)-methylcytidine(1402) in 16S rRNA + S-adenosyl-L-homocysteine + H(+). Its function is as follows. Specifically methylates the N4 position of cytidine in position 1402 (C1402) of 16S rRNA. This chain is Ribosomal RNA small subunit methyltransferase H, found in Salmonella choleraesuis (strain SC-B67).